A 262-amino-acid chain; its full sequence is Hemin import ATP-binding protein HmuV (262 aa).

The 242-residue stretch at 3–244 (LQARNLTLAR…DHMRRVYGIE (242 aa)) folds into the ABC transporter domain. Residue 35–42 (GANGAGKS) coordinates ATP.

This sequence belongs to the ABC transporter superfamily. Heme (hemin) importer (TC 3.A.1.14.5) family. As to quaternary structure, the complex is composed of two ATP-binding proteins (HmuV), two transmembrane proteins (HmuU) and a solute-binding protein (HmuT).

It is found in the cell inner membrane. Its function is as follows. Part of the ABC transporter complex HmuTUV involved in hemin import. Responsible for energy coupling to the transport system. The chain is Hemin import ATP-binding protein HmuV from Bordetella bronchiseptica (strain ATCC BAA-588 / NCTC 13252 / RB50) (Alcaligenes bronchisepticus).